A 270-amino-acid polypeptide reads, in one-letter code: tRNA pseudouridine synthase A (270 aa).

Catalysis depends on D60, which acts as the Nucleophile. Y118 provides a ligand contact to substrate.

Belongs to the tRNA pseudouridine synthase TruA family. As to quaternary structure, homodimer.

The catalysed reaction is uridine(38/39/40) in tRNA = pseudouridine(38/39/40) in tRNA. Its function is as follows. Formation of pseudouridine at positions 38, 39 and 40 in the anticodon stem and loop of transfer RNAs. This is tRNA pseudouridine synthase A from Cronobacter sakazakii (strain ATCC BAA-894) (Enterobacter sakazakii).